Reading from the N-terminus, the 101-residue chain is Small ribosomal subunit protein uS14 (101 aa).

Belongs to the universal ribosomal protein uS14 family. Part of the 30S ribosomal subunit. Contacts proteins S3 and S10.

Binds 16S rRNA, required for the assembly of 30S particles and may also be responsible for determining the conformation of the 16S rRNA at the A site. The protein is Small ribosomal subunit protein uS14 of Methylococcus capsulatus (strain ATCC 33009 / NCIMB 11132 / Bath).